The primary structure comprises 371 residues: Queuine tRNA-ribosyltransferase (371 aa).

D89 functions as the Proton acceptor in the catalytic mechanism. Residues D89–F93, D143, Q185, and G212 contribute to the substrate site. Residues G243–D249 form an RNA binding region. D262 acts as the Nucleophile in catalysis. Residues T267–R271 form an RNA binding; important for wobble base 34 recognition region. Zn(2+)-binding residues include C300, C302, C305, and H331.

This sequence belongs to the queuine tRNA-ribosyltransferase family. As to quaternary structure, homodimer. Within each dimer, one monomer is responsible for RNA recognition and catalysis, while the other monomer binds to the replacement base PreQ1. The cofactor is Zn(2+).

It catalyses the reaction 7-aminomethyl-7-carbaguanine + guanosine(34) in tRNA = 7-aminomethyl-7-carbaguanosine(34) in tRNA + guanine. It participates in tRNA modification; tRNA-queuosine biosynthesis. Catalyzes the base-exchange of a guanine (G) residue with the queuine precursor 7-aminomethyl-7-deazaguanine (PreQ1) at position 34 (anticodon wobble position) in tRNAs with GU(N) anticodons (tRNA-Asp, -Asn, -His and -Tyr). Catalysis occurs through a double-displacement mechanism. The nucleophile active site attacks the C1' of nucleotide 34 to detach the guanine base from the RNA, forming a covalent enzyme-RNA intermediate. The proton acceptor active site deprotonates the incoming PreQ1, allowing a nucleophilic attack on the C1' of the ribose to form the product. After dissociation, two additional enzymatic reactions on the tRNA convert PreQ1 to queuine (Q), resulting in the hypermodified nucleoside queuosine (7-(((4,5-cis-dihydroxy-2-cyclopenten-1-yl)amino)methyl)-7-deazaguanosine). The protein is Queuine tRNA-ribosyltransferase of Thioalkalivibrio sulfidiphilus (strain HL-EbGR7).